A 538-amino-acid polypeptide reads, in one-letter code: Putative cysteine ligase BshC (538 aa).

A coiled-coil region spans residues 460-484; that stretch reads KINEQIELLERMLKRNVEKKHEVEL.

Belongs to the BshC family.

Involved in bacillithiol (BSH) biosynthesis. May catalyze the last step of the pathway, the addition of cysteine to glucosamine malate (GlcN-Mal) to generate BSH. The chain is Putative cysteine ligase BshC from Bacillus cereus (strain ZK / E33L).